The chain runs to 365 residues: 7-methylxanthine methyltransferase PCS1 (365 aa).

Residue tyrosine 19 coordinates S-adenosyl-L-homocysteine. Threonine 26 contacts caffeine. Residues cysteine 62, asparagine 67, aspartate 99, leucine 100, serine 134, and phenylalanine 135 each coordinate S-adenosyl-L-homocysteine. 3 residues coordinate caffeine: tyrosine 152, histidine 155, and tryptophan 156. Position 173 (asparagine 173) interacts with Mg(2+). Histidine 221 is a caffeine binding site. Residues aspartate 259, phenylalanine 261, and asparagine 262 each coordinate Mg(2+). Phenylalanine 317 lines the caffeine pocket.

This sequence belongs to the methyltransferase superfamily. Type-7 methyltransferase family. Mg(2+) serves as cofactor.

The enzyme catalyses 1,7-dimethylxanthine + S-adenosyl-L-methionine = caffeine + S-adenosyl-L-homocysteine + H(+). It carries out the reaction 7-methylxanthine + S-adenosyl-L-methionine = theobromine + S-adenosyl-L-homocysteine + H(+). Its pathway is alkaloid biosynthesis. Involved in the biosynthesis of caffeine. Catalyzes the conversion of 7-methylxanthine (7mX) to theobromine, and, to some extent, the conversion of paraxanthine to caffeine, but seems not able to convert theobromine to caffeine. This Camellia ptilophylla (Cocoa tea) protein is 7-methylxanthine methyltransferase PCS1.